A 382-amino-acid chain; its full sequence is Gas vesicle protein C1 (382 aa).

Residues 1 to 18 show a composition bias toward basic and acidic residues; it reads MSVTDKRDEMSTARDKFA. Residues 1–21 are disordered; that stretch reads MSVTDKRDEMSTARDKFAESQ. Repeat copies occupy residues 22–60, 61–92, 93–130, 131–168, 169–200, 201–240, and 241–284. The tract at residues 22-284 is 7 X approximate tandem repeats; that stretch reads QEFESYADEF…VEAEAEVSPD (263 aa). Over residues 260-302 the composition is skewed to acidic residues; that stretch reads GAAEAEAEPVEADADVEAEAEVSPDEAGGESAGTEEEETEPAE. Residues 260-382 form a disordered region; the sequence is GAAEAEAEPV…DVPLRPDDKT (123 aa). Residues 303–316 show a composition bias toward low complexity; sequence VETAAPEVEGSPAD. Acidic residues predominate over residues 317-336; sequence TADEAEDTEAEEETEEEAPE. Positions 365–382 are enriched in basic and acidic residues; that stretch reads EYRDEYGEDVPLRPDDKT.

This sequence belongs to the halobacterial gas vesicle GvpC family. In terms of assembly, forms homodimers, interacts with GvpF1, GvpH1, GvpI1, GvpL1, GvpN1 and GvpO1 via its C-terminus (residues 329-382).

It is found in the gas vesicle. It localises to the cytoplasm. In terms of biological role, confers stability, involved in shaping gas vesicles. Gas vesicles are hollow, gas filled proteinaceous nanostructures found in several microbial planktonic microorganisms. They allow positioning of halobacteria at the optimal depth for growth in the poorly aerated, shallow brine pools of their habitat. Functionally, expression of a 9.5 kb p-vac DNA fragment containing 2 divergently transcribed regions (gvpD-gvpE-gvpF-gvpG-gvpH-gvpI-gvpJ-gvpK-gvpL-gvpM and gvpA-gvpC-gvpN-gvpO) allows H.volcanii to produce gas vesicles. A similar region restores gas vesicle production in H.halobium without the p-vac locus, but it still has the c-vac locus. This chain is Gas vesicle protein C1 (gvpC1), found in Halobacterium salinarum (strain ATCC 700922 / JCM 11081 / NRC-1) (Halobacterium halobium).